We begin with the raw amino-acid sequence, 696 residues long: Solute carrier family 53 member 1 (696 aa).

Residues 1-228 (MKFAEHLSAH…RVPPLGAAQP (228 aa)) lie on the Cytoplasmic side of the membrane. Residues 2–224 (KFAEHLSAHI…MKRLRVPPLG (223 aa)) form the SPX domain. Residues 158–165 (KILKKHDK) are important for inositol polyphosphate binding. The helical transmembrane segment at 229-259 (APAWTTFRVGLFCGIFIVLNITLVLAAVFKL) threads the bilayer. Over 260 to 264 (ETDRS) the chain is Extracellular. Residues 265 to 296 (IWPLIRIYRGGFLLIEFLFLLGINTYGWRQAG) form a helical membrane-spanning segment. Over 297–309 (VNHVLIFELNPRS) the chain is Cytoplasmic. Residues 310–337 (NLSHQHLFEIAGFLGILWCLSLLACFFA) form a helical membrane-spanning segment. The Extracellular portion of the chain corresponds to 338–343 (PISVIP). The helical transmembrane segment at 344-365 (TYVYPLALYGFMVFFLINPTKT) threads the bilayer. Positions 366–383 (FYYKSRFWLLKLLFRVFT) form an intramembrane region, helical. The Cytoplasmic segment spans residues 384–388 (APFHK). A discontinuously helical transmembrane segment spans residues 389–422 (VGFADFWLADQLNSLSVILMDLEYMICFYSLELK). Phosphate is bound by residues Asp-398 and Asn-401. The Extracellular segment spans residues 423–429 (WDESKGL). The discontinuously helical transmembrane segment at 430 to 471 (LPNNSEESGICHKYTYGVRAIVQCIPAWLRFIQCLRRYRDTK) threads the bilayer. Residues 439–643 (ICHKYTYGVR…LNADDQTLLE (205 aa)) form the EXS domain. Residue Arg-472 is a topological domain, cytoplasmic. Residues 473 to 503 (AFPHLVNAGKYSTTFFMVTFAALYSTHKERG) traverse the membrane as a helical segment. The phosphate site is built by Lys-482 and Tyr-483. The Extracellular portion of the chain corresponds to 504 to 506 (HSD). A helical membrane pass occupies residues 507-534 (TMVFFYLWIVFYIISSCYTLIWDLKMDW). Residues 535–553 (GLFDKNAGENTFLREEIVY) lie on the Cytoplasmic side of the membrane. Residues 554–585 (PQKAYYYCAIIEDVILRFAWTIQISITSTTLL) traverse the membrane as a discontinuously helical segment. Arg-570 is a phosphate binding site. At 586 to 587 (PH) the chain is on the extracellular side. A helical transmembrane segment spans residues 588–626 (SGDIIATVFAPLEVFRRFVWNFFRLENEHLNNCGEFRAV). 2 residues coordinate phosphate: Arg-603 and Arg-604. The Cytoplasmic portion of the chain corresponds to 627-696 (RDISVAPLNA…IEDTDDEANT (70 aa)). Ser-668 carries the post-translational modification Phosphoserine. The interval 673–696 (RLASQSKARDTKVLIEDTDDEANT) is disordered. Residue Thr-690 is modified to Phosphothreonine.

The protein belongs to the SYG1 (TC 2.A.94) family. In terms of assembly, homodimer. As to expression, widely expressed. Detected in spleen, lymph node, thymus, leukocytes, bone marrow, heart, kidney, pancreas and skeletal muscle.

Its subcellular location is the cell membrane. The catalysed reaction is phosphate(in) = phosphate(out). Its activity is regulated as follows. Allosterically activated by inositol hexakisphosphate (Ins6P). Functionally, inorganic ion transporter that mediates phosphate ion export across plasma membrane. Plays a major role in phosphate homeostasis, preventing intracellular phosphate accumulation and possible calcium phosphate precipitation, ultimately preserving calcium signaling. Binds inositol hexakisphosphate (Ins6P) and similar inositol polyphosphates, such as 5-diphospho-inositol pentakisphosphate (5-InsP7), which are important intracellular signaling molecules involved in regulation of phosphate flux. In Homo sapiens (Human), this protein is Solute carrier family 53 member 1.